The primary structure comprises 491 residues: Probable cytosol aminopeptidase (491 aa).

Mn(2+) is bound by residues lysine 263 and aspartate 268. Residue lysine 275 is part of the active site. Mn(2+) contacts are provided by aspartate 286, aspartate 345, and glutamate 347. Arginine 349 is a catalytic residue.

It belongs to the peptidase M17 family. Mn(2+) serves as cofactor.

Its subcellular location is the cytoplasm. The enzyme catalyses Release of an N-terminal amino acid, Xaa-|-Yaa-, in which Xaa is preferably Leu, but may be other amino acids including Pro although not Arg or Lys, and Yaa may be Pro. Amino acid amides and methyl esters are also readily hydrolyzed, but rates on arylamides are exceedingly low.. The catalysed reaction is Release of an N-terminal amino acid, preferentially leucine, but not glutamic or aspartic acids.. Functionally, presumably involved in the processing and regular turnover of intracellular proteins. Catalyzes the removal of unsubstituted N-terminal amino acids from various peptides. The protein is Probable cytosol aminopeptidase of Haemophilus influenzae (strain PittEE).